Consider the following 370-residue polypeptide: UPF0284 protein PCC7424_2681 (370 aa).

Belongs to the UPF0284 family.

The polypeptide is UPF0284 protein PCC7424_2681 (Gloeothece citriformis (strain PCC 7424) (Cyanothece sp. (strain PCC 7424))).